The sequence spans 424 residues: MASSNLIKQLQERGLVAQVTDEEALAERLAQGPIALYCGFDPTADSLHLGHLVPLLCLKRFQQAGHKPVALVGGATGLIGDPSFKAAERKLNTEETVQEWVDKIRKQVAPFLDFDCGENSAIAANNYDWFGNMNVLTFLRDIGKHFSVNQMINKEAVKQRLNREDQGISFTEFSYNLLQGYDFACLNKQYGVVLQIGGSDQWGNITSGIDLTRRLHQNQVFGLTVPLITKADGTKFGKTEGGAVWLDPKKTSPYKFYQFWINTADADVYRFLKFFTFMSIEEINALEEEDKNSGKAPRAQYVLAEQVTRLVHGEEGLQAAKRITECLFSGSLSALSEADFEQLAQDGVPMVEMEKGADLMQALVDSELQPSRGQARKTIASNAITINGEKQSDPEYFFKEEDRLFGRFTLLRRGKKNYCLICWK.

Tyr37 lines the L-tyrosine pocket. A 'HIGH' region motif is present at residues 42–51 (PTADSLHLGH). The residue at position 144 (Lys144) is an N6-acetyllysine. L-tyrosine contacts are provided by Tyr175 and Gln179. The 'KMSKS' region motif lies at 235-239 (KFGKT). Lys238 serves as a coordination point for ATP. Residues 357–414 (ADLMQALVDSELQPSRGQARKTIASNAITINGEKQSDPEYFFKEEDRLFGRFTLLRRG) enclose the S4 RNA-binding domain.

The protein belongs to the class-I aminoacyl-tRNA synthetase family. TyrS type 1 subfamily. Homodimer.

It localises to the cytoplasm. The catalysed reaction is tRNA(Tyr) + L-tyrosine + ATP = L-tyrosyl-tRNA(Tyr) + AMP + diphosphate + H(+). Its function is as follows. Catalyzes the attachment of tyrosine to tRNA(Tyr) in a two-step reaction: tyrosine is first activated by ATP to form Tyr-AMP and then transferred to the acceptor end of tRNA(Tyr). The protein is Tyrosine--tRNA ligase of Escherichia coli (strain K12 / DH10B).